Consider the following 185-residue polypeptide: Small ribosomal subunit protein uS5 (185 aa).

Residues 18-81 (FVDKLVHINR…ESAKRALIRV (64 aa)) form the S5 DRBM domain. The disordered stretch occupies residues 157–185 (SPRSVAARRGIKVSQLQSRRRVEDAEATD). Residues 176–185 (RRVEDAEATD) are compositionally biased toward basic and acidic residues.

Belongs to the universal ribosomal protein uS5 family. Part of the 30S ribosomal subunit. Contacts proteins S4 and S8.

With S4 and S12 plays an important role in translational accuracy. Functionally, located at the back of the 30S subunit body where it stabilizes the conformation of the head with respect to the body. This Xanthobacter autotrophicus (strain ATCC BAA-1158 / Py2) protein is Small ribosomal subunit protein uS5.